We begin with the raw amino-acid sequence, 76 residues long: Omega-conotoxin-like TxO5 (76 aa).

Positions 1–22 are cleaved as a signal peptide; that stretch reads MKLTCMMIVAVLFLTAWTFVTA. Residues 23-48 constitute a propeptide that is removed on maturation; it reads ITSNGLENLFPKAHHEMKNPEASKLN. 3 cysteine pairs are disulfide-bonded: Cys-51–Cys-66, Cys-58–Cys-70, and Cys-65–Cys-75.

This sequence belongs to the conotoxin O1 superfamily. As to expression, expressed by the venom duct.

It is found in the secreted. Omega-conotoxins act at presynaptic membranes, they bind and block voltage-gated calcium channels (Cav). This chain is Omega-conotoxin-like TxO5, found in Conus textile (Cloth-of-gold cone).